Reading from the N-terminus, the 189-residue chain is Putative dihydrofolate reductase (189 aa).

One can recognise a DHFR domain in the interval 3-185 (KMNLIVAMDA…LKFEFCKWKV (183 aa)). NADP(+) contacts are provided by residues alanine 9 and 15 to 21 (GIGKNGV). 29–34 (DMQYFA) lines the substrate pocket. 53–55 (RKC) contributes to the NADP(+) binding site. Arginine 69 contacts substrate. NADP(+) is bound by residues 75 to 77 (SRQ) and 115 to 122 (GGAEIYDL).

This sequence belongs to the dihydrofolate reductase family.

It carries out the reaction (6S)-5,6,7,8-tetrahydrofolate + NADP(+) = 7,8-dihydrofolate + NADPH + H(+). Its pathway is cofactor biosynthesis; tetrahydrofolate biosynthesis; 5,6,7,8-tetrahydrofolate from 7,8-dihydrofolate: step 1/1. In terms of biological role, key enzyme in folate metabolism. Catalyzes an essential reaction for de novo glycine and purine synthesis, and for DNA precursor synthesis. The polypeptide is Putative dihydrofolate reductase (dhfr-1) (Caenorhabditis elegans).